Reading from the N-terminus, the 311-residue chain is Thioredoxin reductase (311 aa).

35-42 (ERGIPGGQ) contributes to the FAD binding site. An intrachain disulfide couples Cys134 to Cys137. FAD is bound at residue 277–286 (DVRDKGLRQI).

It belongs to the class-II pyridine nucleotide-disulfide oxidoreductase family. As to quaternary structure, homodimer. FAD is required as a cofactor.

It is found in the cytoplasm. The enzyme catalyses [thioredoxin]-dithiol + NADP(+) = [thioredoxin]-disulfide + NADPH + H(+). This Staphylococcus aureus (strain COL) protein is Thioredoxin reductase (trxB).